A 244-amino-acid polypeptide reads, in one-letter code: 1-(5-phosphoribosyl)-5-[(5-phosphoribosylamino)methylideneamino] imidazole-4-carboxamide isomerase (244 aa).

Catalysis depends on D10, which acts as the Proton acceptor. The active-site Proton donor is D132.

It belongs to the HisA/HisF family.

It is found in the cytoplasm. The enzyme catalyses 1-(5-phospho-beta-D-ribosyl)-5-[(5-phospho-beta-D-ribosylamino)methylideneamino]imidazole-4-carboxamide = 5-[(5-phospho-1-deoxy-D-ribulos-1-ylimino)methylamino]-1-(5-phospho-beta-D-ribosyl)imidazole-4-carboxamide. It functions in the pathway amino-acid biosynthesis; L-histidine biosynthesis; L-histidine from 5-phospho-alpha-D-ribose 1-diphosphate: step 4/9. The sequence is that of 1-(5-phosphoribosyl)-5-[(5-phosphoribosylamino)methylideneamino] imidazole-4-carboxamide isomerase from Xanthomonas oryzae pv. oryzae (strain MAFF 311018).